The chain runs to 308 residues: Porphobilinogen deaminase (308 aa).

The residue at position 243 (Cys243) is an S-(dipyrrolylmethanemethyl)cysteine.

The protein belongs to the HMBS family. In terms of assembly, monomer. Dipyrromethane serves as cofactor.

The catalysed reaction is 4 porphobilinogen + H2O = hydroxymethylbilane + 4 NH4(+). Its pathway is porphyrin-containing compound metabolism; protoporphyrin-IX biosynthesis; coproporphyrinogen-III from 5-aminolevulinate: step 2/4. Tetrapolymerization of the monopyrrole PBG into the hydroxymethylbilane pre-uroporphyrinogen in several discrete steps. This is Porphobilinogen deaminase from Mesorhizobium japonicum (strain LMG 29417 / CECT 9101 / MAFF 303099) (Mesorhizobium loti (strain MAFF 303099)).